Reading from the N-terminus, the 397-residue chain is 4-O-methyl-glucuronoyl methylesterase (397 aa).

Residues 1–18 form the signal peptide; that stretch reads MVHLTSALLVAGAAFAAA. Intrachain disulfides connect Cys31-Cys65, Cys212-Cys347, and Cys244-Cys319. Residues 211-216 carry the GXSYXG catalytic site motif motif; sequence GCSRNG. The Nucleophile role is filled by Ser213. Residues Lys217, Gln259, Glu267, and Trp310 each contribute to the substrate site. His346 acts as the Proton donor/acceptor in catalysis.

The protein belongs to the carbohydrate esterase 15 (CE15) family.

Its subcellular location is the secreted. The catalysed reaction is a 4-O-methyl-alpha-D-glucuronosyl ester derivative + H2O = 4-O-methyl-alpha-D-glucuronate derivative + an alcohol + H(+). Its function is as follows. Glucuronoyl esterase which may play a significant role in biomass degradation, as it is considered to disconnect hemicellulose from lignin through the hydrolysis of the ester bond between 4-O-methyl-D-glucuronic acid residues of glucuronoxylans and aromatic alcohols of lignin. This Thermothelomyces thermophilus (strain ATCC 42464 / BCRC 31852 / DSM 1799) (Sporotrichum thermophile) protein is 4-O-methyl-glucuronoyl methylesterase (ge2).